The primary structure comprises 428 residues: Putative aspergillopepsin A-like aspartic endopeptidase AFUA_2G15950 (428 aa).

The N-terminal stretch at 1 to 19 is a signal peptide; it reads MHSLQSFLFLLLLGYGVFA. A propeptide spans 20 to 90 (activation peptide); it reads APTSPQAQSQ…GTAANLVTDV (71 aa). Residues 110-425 enclose the Peptidase A1 domain; that stretch reads FVSPVTIGGQ…DLRGPSIGLA (316 aa). D126 is a catalytic residue. N-linked (GlcNAc...) asparagine glycosylation is present at N276. The active site involves D312. An N-linked (GlcNAc...) asparagine glycan is attached at N380.

This sequence belongs to the peptidase A1 family.

It localises to the secreted. The chain is Putative aspergillopepsin A-like aspartic endopeptidase AFUA_2G15950 from Aspergillus fumigatus (strain ATCC MYA-4609 / CBS 101355 / FGSC A1100 / Af293) (Neosartorya fumigata).